The primary structure comprises 1042 residues: Glutamate dehydrogenase 2 (1042 aa).

Lys-596 is an active-site residue. Position 763 is an ADP-ribosylarginine; by Legionella Lart1 (Arg-763).

Belongs to the Glu/Leu/Phe/Val dehydrogenases family. Homodimer. Post-translationally, (Microbial infection) ADP-ribosylated at Arg-763 by the Legionella pneumophila effector Lart1, which inhibits the glutamate dehydrogenase activity. Amoeba are natural hosts of Legionella, and ADP-ribosylation by Lart1 may promote Legionella parasitism.

It localises to the cytoplasm. It catalyses the reaction L-glutamate + NAD(+) + H2O = 2-oxoglutarate + NH4(+) + NADH + H(+). Its activity is regulated as follows. Activity is stimulated by AMP. (Microbial infection) Inhibited by ADP-ribosylation. The polypeptide is Glutamate dehydrogenase 2 (glud2) (Dictyostelium discoideum (Social amoeba)).